The chain runs to 286 residues: Shikimate dehydrogenase (NADP(+)) (286 aa).

Shikimate contacts are provided by residues 22 to 24 (SFS) and Thr-69. Residue Lys-73 is the Proton acceptor of the active site. Glu-85 contributes to the NADP(+) binding site. 2 residues coordinate shikimate: Asn-94 and Asp-109. Residues 133 to 137 (GAGGA), 157 to 162 (NRTIDK), and Leu-231 each bind NADP(+). Tyr-233 is a binding site for shikimate. Gly-254 lines the NADP(+) pocket.

Belongs to the shikimate dehydrogenase family. Homodimer.

It catalyses the reaction shikimate + NADP(+) = 3-dehydroshikimate + NADPH + H(+). It functions in the pathway metabolic intermediate biosynthesis; chorismate biosynthesis; chorismate from D-erythrose 4-phosphate and phosphoenolpyruvate: step 4/7. Its function is as follows. Involved in the biosynthesis of the chorismate, which leads to the biosynthesis of aromatic amino acids. Catalyzes the reversible NADPH linked reduction of 3-dehydroshikimate (DHSA) to yield shikimate (SA). This is Shikimate dehydrogenase (NADP(+)) from Alkaliphilus oremlandii (strain OhILAs) (Clostridium oremlandii (strain OhILAs)).